A 76-amino-acid polypeptide reads, in one-letter code: Omega-conotoxin-like TeAr94 (76 aa).

The first 22 residues, 1–22 (MKLTCMMIVAVLFLTAWTFVTA), serve as a signal peptide directing secretion. Positions 23 to 50 (VPHSSNALENLYLKAHHEMNNPEDSELN) are excised as a propeptide. 3 disulfide bridges follow: cysteine 53–cysteine 67, cysteine 60–cysteine 71, and cysteine 66–cysteine 75.

This sequence belongs to the conotoxin O1 superfamily. In terms of tissue distribution, expressed by the venom duct.

It is found in the secreted. Its function is as follows. Omega-conotoxins act at presynaptic membranes, they bind and block voltage-gated calcium channels. In Conus textile (Cloth-of-gold cone), this protein is Omega-conotoxin-like TeAr94.